The sequence spans 901 residues: Aconitate hydratase A (901 aa).

Positions 443, 509, and 512 each coordinate [4Fe-4S] cluster.

It belongs to the aconitase/IPM isomerase family. As to quaternary structure, monomer. [4Fe-4S] cluster is required as a cofactor.

The enzyme catalyses citrate = D-threo-isocitrate. It carries out the reaction (2S,3R)-3-hydroxybutane-1,2,3-tricarboxylate = 2-methyl-cis-aconitate + H2O. Its pathway is carbohydrate metabolism; tricarboxylic acid cycle; isocitrate from oxaloacetate: step 2/2. The protein operates within organic acid metabolism; propanoate degradation. Involved in the catabolism of short chain fatty acids (SCFA) via the tricarboxylic acid (TCA)(acetyl degradation route) and probably the 2-methylcitrate cycle I (propionate degradation route). Catalyzes the reversible isomerization of citrate to isocitrate via cis-aconitate. Could catalyze the hydration of 2-methyl-cis-aconitate to yield (2R,3S)-2-methylisocitrate. The apo form of AcnA functions as a RNA-binding regulatory protein. The sequence is that of Aconitate hydratase A (acnA) from Staphylococcus aureus (strain COL).